Here is a 637-residue protein sequence, read N- to C-terminus: ATP-dependent zinc metalloprotease FtsH (637 aa).

Over 1–6 (MNNQGR) the chain is Cytoplasmic. Residues 7–27 (SILAWATLFIFVILLFNVFQS) traverse the membrane as a helical segment. The Periplasmic segment spans residues 28 to 103 (DSLLGGRNNI…VVPLETRMNT (76 aa)). Residues 104–124 (FLGFLISWFPMLLLIGVWVFF) traverse the membrane as a helical segment. At 125-637 (MRQMHGGGKA…TKAKKENYAS (513 aa)) the chain is on the cytoplasmic side. 195-202 (GPPGTGKT) serves as a coordination point for ATP. Residue His417 coordinates Zn(2+). The active site involves Glu418. Positions 421 and 495 each coordinate Zn(2+). Positions 603 to 637 (ENKFPFNDSSTIKIDKEKSPEKTKTTKAKKENYAS) are disordered. Over residues 615–637 (KIDKEKSPEKTKTTKAKKENYAS) the composition is skewed to basic and acidic residues.

The protein in the central section; belongs to the AAA ATPase family. This sequence in the C-terminal section; belongs to the peptidase M41 family. In terms of assembly, homohexamer. It depends on Zn(2+) as a cofactor.

It is found in the cell inner membrane. Its function is as follows. Acts as a processive, ATP-dependent zinc metallopeptidase for both cytoplasmic and membrane proteins. Plays a role in the quality control of integral membrane proteins. This Rickettsia conorii (strain ATCC VR-613 / Malish 7) protein is ATP-dependent zinc metalloprotease FtsH.